Here is a 197-residue protein sequence, read N- to C-terminus: 3-isopropylmalate dehydratase small subunit (197 aa).

The protein belongs to the LeuD family. LeuD type 1 subfamily. Heterodimer of LeuC and LeuD.

It catalyses the reaction (2R,3S)-3-isopropylmalate = (2S)-2-isopropylmalate. Its pathway is amino-acid biosynthesis; L-leucine biosynthesis; L-leucine from 3-methyl-2-oxobutanoate: step 2/4. Its function is as follows. Catalyzes the isomerization between 2-isopropylmalate and 3-isopropylmalate, via the formation of 2-isopropylmaleate. The protein is 3-isopropylmalate dehydratase small subunit of Shouchella clausii (strain KSM-K16) (Alkalihalobacillus clausii).